A 190-amino-acid chain; its full sequence is ATP synthase subunit delta (190 aa).

This sequence belongs to the ATPase delta chain family. As to quaternary structure, F-type ATPases have 2 components, F(1) - the catalytic core - and F(0) - the membrane proton channel. F(1) has five subunits: alpha(3), beta(3), gamma(1), delta(1), epsilon(1). F(0) has three main subunits: a(1), b(2) and c(10-14). The alpha and beta chains form an alternating ring which encloses part of the gamma chain. F(1) is attached to F(0) by a central stalk formed by the gamma and epsilon chains, while a peripheral stalk is formed by the delta and b chains.

Its subcellular location is the cell inner membrane. F(1)F(0) ATP synthase produces ATP from ADP in the presence of a proton or sodium gradient. F-type ATPases consist of two structural domains, F(1) containing the extramembraneous catalytic core and F(0) containing the membrane proton channel, linked together by a central stalk and a peripheral stalk. During catalysis, ATP synthesis in the catalytic domain of F(1) is coupled via a rotary mechanism of the central stalk subunits to proton translocation. Its function is as follows. This protein is part of the stalk that links CF(0) to CF(1). It either transmits conformational changes from CF(0) to CF(1) or is implicated in proton conduction. The polypeptide is ATP synthase subunit delta (Petrotoga mobilis (strain DSM 10674 / SJ95)).